The sequence spans 288 residues: Eukaryotic translation initiation factor 3 subunit F-2 (288 aa).

The MPN domain maps to 12–149; that stretch reads VLLHPLVLFQ…TRIFCAVATG (138 aa).

Belongs to the eIF-3 subunit F family. Component of the eukaryotic translation initiation factor 3 (eIF-3) complex. The eIF-3 complex interacts with pix.

It localises to the cytoplasm. Component of the eukaryotic translation initiation factor 3 (eIF-3) complex, which is involved in protein synthesis of a specialized repertoire of mRNAs and, together with other initiation factors, stimulates binding of mRNA and methionyl-tRNAi to the 40S ribosome. The eIF-3 complex specifically targets and initiates translation of a subset of mRNAs involved in cell proliferation. This chain is Eukaryotic translation initiation factor 3 subunit F-2, found in Drosophila persimilis (Fruit fly).